Reading from the N-terminus, the 131-residue chain is Small ribosomal subunit protein uS11 (131 aa).

This sequence belongs to the universal ribosomal protein uS11 family. As to quaternary structure, part of the 30S ribosomal subunit. Interacts with proteins S7 and S18. Binds to IF-3.

Located on the platform of the 30S subunit, it bridges several disparate RNA helices of the 16S rRNA. Forms part of the Shine-Dalgarno cleft in the 70S ribosome. This is Small ribosomal subunit protein uS11 from Bacillus pumilus (strain SAFR-032).